We begin with the raw amino-acid sequence, 203 residues long: Large ribosomal subunit protein uL13 (203 aa).

At A2 the chain carries N-acetylalanine. R59 is subject to Citrulline. S77 bears the Phosphoserine mark. R140 bears the Citrulline mark. K191 is subject to N6-acetyllysine.

It belongs to the universal ribosomal protein uL13 family. In terms of assembly, component of the 60S ribosome. Component of the GAIT complex. Interacts with EIF4G1. Phosphorylation at Ser-77 upon interferon-gamma treatment in monocytes involves a DAPK1-DAPK3 kinase cascade and is causing release from the ribosome, association with the GAIT complex and subsequent involvement in transcript-selective translation inhibition. In terms of processing, citrullinated by PADI4.

Its subcellular location is the cytoplasm. Associated with ribosomes but is not required for canonical ribosome function and has extra-ribosomal functions. Component of the GAIT (gamma interferon-activated inhibitor of translation) complex which mediates interferon-gamma-induced transcript-selective translation inhibition in inflammation processes. Upon interferon-gamma activation and subsequent phosphorylation dissociates from the ribosome and assembles into the GAIT complex which binds to stem loop-containing GAIT elements in the 3'-UTR of diverse inflammatory mRNAs (such as ceruplasmin) and suppresses their translation. In the GAIT complex interacts with m7G cap-bound eIF4G at or near the eIF3-binding site and blocks the recruitment of the 43S ribosomal complex. Involved in methylation of rRNA. The chain is Large ribosomal subunit protein uL13 (RPL13A) from Oryctolagus cuniculus (Rabbit).